Reading from the N-terminus, the 552-residue chain is Urocanate hydratase (552 aa).

Residues 48 to 49 (GG), Q126, 172 to 174 (GMG), D192, 238 to 239 (NA), 259 to 263 (QTSAH), 268 to 269 (YL), and Y317 each bind NAD(+). C405 is an active-site residue. Residue G487 participates in NAD(+) binding.

The protein belongs to the urocanase family. It depends on NAD(+) as a cofactor.

It localises to the cytoplasm. It catalyses the reaction 4-imidazolone-5-propanoate = trans-urocanate + H2O. Its pathway is amino-acid degradation; L-histidine degradation into L-glutamate; N-formimidoyl-L-glutamate from L-histidine: step 2/3. Its function is as follows. Catalyzes the conversion of urocanate to 4-imidazolone-5-propionate. The chain is Urocanate hydratase from Streptomyces griseus subsp. griseus (strain JCM 4626 / CBS 651.72 / NBRC 13350 / KCC S-0626 / ISP 5235).